Consider the following 297-residue polypeptide: Nuclear transcription factor Y subunit B-11 (297 aa).

The segment at 1-25 (MKSRKSYGHLLSPVGSPPLDNESGE) is disordered. A DNA-binding region spans residues 63–69 (LPIANVS). The segment at 90–101 (VQECVSEFISFV) is subunit association domain (SAD).

This sequence belongs to the NFYB/HAP3 subunit family. In terms of assembly, heterotrimeric transcription factor composed of three components, NF-YA, NF-YB and NF-YC. NF-YB and NF-YC must interact and dimerize for NF-YA association and DNA binding. Interacts with NFYC2, NFYC4 and NFYC6. As to expression, expressed in roots, culms, nodes, leaf blades, leaf sheaths and young panicles.

Its subcellular location is the nucleus. It is found in the cytoplasm. Functionally, probable transcription factor involved in the regulation of flowering time under long day (LD) conditions. Functions as a repressor of flowering, independently of HD1 and GHD7. Controls flowering time by negatively regulating the expression of EHD1 and HD3A. Regulates plant height by promoting cell elongation in the internodes. Component of the NF-Y/HAP transcription factor complex. This is Nuclear transcription factor Y subunit B-11 (HD5) from Oryza sativa subsp. japonica (Rice).